The chain runs to 231 residues: Ion-translocating oxidoreductase complex subunit E (231 aa).

6 helical membrane passes run 18-38 (GLVQ…LTNA), 39-59 (LGLG…VSLV), 69-89 (IPVF…FINA), 93-113 (GLYL…VIIG), 127-147 (STFD…VLGA), and 182-202 (TFLL…LIAL).

The protein belongs to the NqrDE/RnfAE family. The complex is composed of six subunits: RnfA, RnfB, RnfC, RnfD, RnfE and RnfG.

The protein resides in the cell inner membrane. Its function is as follows. Part of a membrane-bound complex that couples electron transfer with translocation of ions across the membrane. This chain is Ion-translocating oxidoreductase complex subunit E, found in Shewanella piezotolerans (strain WP3 / JCM 13877).